A 137-amino-acid polypeptide reads, in one-letter code: Protein LTO1 homolog (137 aa).

The residue at position 2 (Ala-2) is an N-acetylalanine. Phosphoserine is present on Ser-4. A deca-GX3 motif; required for interaction with YAE1 and the CIA complex region spans residues 22 to 58 (GYREGYEEGSSLGVMEGRQHGTLHGAKIGSEIGCYQG).

It belongs to the LTO1 family. In terms of assembly, forms a complex with YAE1. Interacts with PYCR1 and PYCR2. Widely expressed. Highly expressed in placenta, kidney and skeletal muscle.

It localises to the nucleus. In terms of biological role, the complex LTO1:YAE1 functions as a target specific adapter that probably recruits apo-ABCE1 to the cytosolic iron-sulfur protein assembly (CIA) complex machinery. May be required for biogenesis of the large ribosomal subunit and initiation of translation. May play a role in the regulation of proline metabolism and ROS production. The chain is Protein LTO1 homolog from Homo sapiens (Human).